A 433-amino-acid chain; its full sequence is N-lysine methyltransferase SMYD2 (433 aa).

The 235-residue stretch at 7–241 (GGLERFCSAG…PGDEVFTSYI (235 aa)) folds into the SET domain. Residue 17–19 (KGR) coordinates S-adenosyl-L-methionine. 8 residues coordinate Zn(2+): Cys-52, Cys-55, Cys-65, Cys-68, Cys-74, Cys-78, His-86, and Cys-90. An MYND-type zinc finger spans residues 52–90 (CECCFARKEGLSKCGRCKQAFYCDVECQKEDWPLHKLEC). S-adenosyl-L-methionine-binding positions include His-137, 206–207 (NH), and 258–260 (YFF). A Phosphoserine modification is found at Ser-283.

It belongs to the class V-like SAM-binding methyltransferase superfamily. As to quaternary structure, interacts (via MYND-type zinc finger) with EPB41L3. Interacts (via SET domain) with p53/TP53. Interacts with RB1 and HSP90AA1. Interacts with RNA polymerase II and HELZ. Interacts with SIN3A and HDAC1. In terms of tissue distribution, highly expressed in heart, skeletal muscle and brain tissue. During cardiac development, it is differentially expressed with highest expression in the neonatal heart while very low expression is detected at 12.5 dpc and adult. Specifically expressed in cardiomyocytes (at protein level).

The protein localises to the cytoplasm. It is found in the cytosol. The protein resides in the nucleus. It catalyses the reaction L-lysyl(4)-[histone H3] + 3 S-adenosyl-L-methionine = N(6),N(6),N(6)-trimethyl-L-lysyl(4)-[histone H3] + 3 S-adenosyl-L-homocysteine + 3 H(+). The enzyme catalyses L-lysyl-[protein] + S-adenosyl-L-methionine = N(6)-methyl-L-lysyl-[protein] + S-adenosyl-L-homocysteine + H(+). Protein-lysine N-methyltransferase that methylates both histones and non-histone proteins, including p53/TP53 and RB1. Specifically trimethylates histone H3 'Lys-4' (H3K4me3) in vivo. The activity requires interaction with HSP90alpha. Shows even higher methyltransferase activity on p53/TP53. Monomethylates 'Lys-370' of p53/TP53, leading to decreased DNA-binding activity and subsequent transcriptional regulation activity of p53/TP53. Monomethylates RB1 at 'Lys-860'. The protein is N-lysine methyltransferase SMYD2 (Smyd2) of Mus musculus (Mouse).